The following is a 338-amino-acid chain: RNA 3'-terminal phosphate cyclase (338 aa).

Residues Q103 and 283–287 (YLADQ) each bind ATP. The active-site Tele-AMP-histidine intermediate is the H308.

The protein belongs to the RNA 3'-terminal cyclase family. Type 1 subfamily.

It is found in the cytoplasm. The catalysed reaction is a 3'-end 3'-phospho-ribonucleotide-RNA + ATP = a 3'-end 2',3'-cyclophospho-ribonucleotide-RNA + AMP + diphosphate. In terms of biological role, catalyzes the conversion of 3'-phosphate to a 2',3'-cyclic phosphodiester at the end of RNA. The mechanism of action of the enzyme occurs in 3 steps: (A) adenylation of the enzyme by ATP; (B) transfer of adenylate to an RNA-N3'P to produce RNA-N3'PP5'A; (C) and attack of the adjacent 2'-hydroxyl on the 3'-phosphorus in the diester linkage to produce the cyclic end product. The biological role of this enzyme is unknown but it is likely to function in some aspects of cellular RNA processing. The chain is RNA 3'-terminal phosphate cyclase from Escherichia coli O127:H6 (strain E2348/69 / EPEC).